A 49-amino-acid chain; its full sequence is Large ribosomal subunit protein bL33 (49 aa).

A disordered region spans residues Ile-18–Lys-49. Residues Asn-25–Lys-34 are compositionally biased toward basic and acidic residues.

The protein belongs to the bacterial ribosomal protein bL33 family.

This is Large ribosomal subunit protein bL33 from Lysinibacillus sphaericus (strain C3-41).